A 410-amino-acid chain; its full sequence is uncharacterized protein (410 aa).

12 helical membrane passes run 27-47, 63-83, 97-117, 118-138, 145-165, 180-200, 228-248, 254-274, 293-313, 316-332, 355-375, and 378-398; these read ILAL…VQSI, SLAL…TGPL, LFIA…ISIV, LLRA…MTYI, NSLS…GFLG, ISLM…LYFL, VLFF…TIFN, LMLE…TIYL, NNIL…TQYN, FIII…FFAS, YLFF…FFWF, and QWLG…FLSF.

It belongs to the major facilitator superfamily.

Its subcellular location is the cell membrane. This is an uncharacterized protein from Buchnera aphidicola subsp. Acyrthosiphon pisum (strain APS) (Acyrthosiphon pisum symbiotic bacterium).